We begin with the raw amino-acid sequence, 126 residues long: Protein K7 (126 aa).

Residues 24–44 traverse the membrane as a helical segment; it reads LPLHLWILCSLLAFLPLLVFI.

Interacts with host CAMLG; this interaction allows efficient apoptosis inhibition. Additionally, interacts with vGPCR/ORF74 and induces its proteasomeal degradation.

The protein localises to the host membrane. It localises to the host mitochondrion. Its function is as follows. Plays a role in the inhibition of host apoptosis to allow completion of the viral lytic replication and may thus favor the maintenance of persistent infection in infected host. The polypeptide is Protein K7 (K7) (Homo sapiens (Human)).